A 201-amino-acid polypeptide reads, in one-letter code: 3-isopropylmalate dehydratase small subunit (201 aa).

Belongs to the LeuD family. LeuD type 1 subfamily. Heterodimer of LeuC and LeuD.

It catalyses the reaction (2R,3S)-3-isopropylmalate = (2S)-2-isopropylmalate. The protein operates within amino-acid biosynthesis; L-leucine biosynthesis; L-leucine from 3-methyl-2-oxobutanoate: step 2/4. In terms of biological role, catalyzes the isomerization between 2-isopropylmalate and 3-isopropylmalate, via the formation of 2-isopropylmaleate. In Rhodopseudomonas palustris (strain ATCC BAA-98 / CGA009), this protein is 3-isopropylmalate dehydratase small subunit.